A 71-amino-acid chain; its full sequence is Heat-stable enterotoxin II (71 aa).

An N-terminal signal peptide occupies residues 1–23 (MKKNIAFLLASMFVFSIATNAYA). 2 disulfides stabilise this stretch: C33-C71 and C44-C59.

The protein localises to the secreted. In terms of biological role, toxin which activates the particulate form of guanylate cyclase and increases cyclic GMP levels within the host intestinal epithelial cells. This is Heat-stable enterotoxin II (stiI) from Escherichia coli.